We begin with the raw amino-acid sequence, 867 residues long: V-set and immunoglobulin domain-containing protein 10-like (867 aa).

The first 27 residues, methionine 1–glycine 27, serve as a signal peptide directing secretion. Topologically, residues leucine 28–alanine 776 are extracellular. A glycan (N-linked (GlcNAc...) asparagine) is linked at asparagine 32. Residues serine 35–serine 45 show a composition bias toward low complexity. Residues serine 35 to tryptophan 60 form a disordered region. N-linked (GlcNAc...) asparagine glycans are attached at residues asparagine 88, asparagine 96, and asparagine 144. The interval leucine 104–histidine 186 is disordered. Residues threonine 137 to lysine 153 are compositionally biased toward polar residues. A compositionally biased stretch (basic and acidic residues) spans proline 159–leucine 170. Positions serine 173–histidine 186 are enriched in polar residues. Ig-like C2-type domains are found at residues proline 302–serine 394 and proline 402–asparagine 487. Residues cysteine 324 and cysteine 378 are joined by a disulfide bond. Asparagine 423 carries an N-linked (GlcNAc...) asparagine glycan. Residues cysteine 428 and cysteine 471 are joined by a disulfide bond. Asparagine 487 carries an N-linked (GlcNAc...) asparagine glycan. The interval alanine 602 to arginine 627 is disordered. N-linked (GlcNAc...) asparagine glycans are attached at residues asparagine 641 and asparagine 650. The helical transmembrane segment at isoleucine 777 to leucine 797 threads the bilayer. The Cytoplasmic segment spans residues cysteine 798–leucine 867.

Expressed in the esophagus, particularly in the suprabasilar layers of the epithelium. Expression is largely reduced in esophageal metaplasia, dysplasia, and adenocarcinoma lesions.

It is found in the membrane. In Homo sapiens (Human), this protein is V-set and immunoglobulin domain-containing protein 10-like (VSIG10L).